The sequence spans 119 residues: Small ribosomal subunit protein bS16 (119 aa).

The protein belongs to the bacterial ribosomal protein bS16 family.

This is Small ribosomal subunit protein bS16 from Chlamydia felis (strain Fe/C-56) (Chlamydophila felis).